The sequence spans 1360 residues: DNA-directed RNA polymerase subunit beta (1360 aa).

It belongs to the RNA polymerase beta chain family. In terms of assembly, the RNAP catalytic core consists of 2 alpha, 1 beta, 1 beta' and 1 omega subunit. When a sigma factor is associated with the core the holoenzyme is formed, which can initiate transcription.

It catalyses the reaction RNA(n) + a ribonucleoside 5'-triphosphate = RNA(n+1) + diphosphate. Functionally, DNA-dependent RNA polymerase catalyzes the transcription of DNA into RNA using the four ribonucleoside triphosphates as substrates. The polypeptide is DNA-directed RNA polymerase subunit beta (Desulfotalea psychrophila (strain LSv54 / DSM 12343)).